The following is a 386-amino-acid chain: Succinate--CoA ligase [ADP-forming] subunit beta (386 aa).

ATP-binding positions include K46, 53-55, E99, A102, and E107; that span reads GRG. 2 residues coordinate Mg(2+): N199 and D213. Substrate is bound by residues N264 and 321–323; that span reads GIV.

The protein belongs to the succinate/malate CoA ligase beta subunit family. As to quaternary structure, heterotetramer of two alpha and two beta subunits. Requires Mg(2+) as cofactor.

The enzyme catalyses succinate + ATP + CoA = succinyl-CoA + ADP + phosphate. It carries out the reaction GTP + succinate + CoA = succinyl-CoA + GDP + phosphate. It participates in carbohydrate metabolism; tricarboxylic acid cycle; succinate from succinyl-CoA (ligase route): step 1/1. In terms of biological role, succinyl-CoA synthetase functions in the citric acid cycle (TCA), coupling the hydrolysis of succinyl-CoA to the synthesis of either ATP or GTP and thus represents the only step of substrate-level phosphorylation in the TCA. The beta subunit provides nucleotide specificity of the enzyme and binds the substrate succinate, while the binding sites for coenzyme A and phosphate are found in the alpha subunit. The protein is Succinate--CoA ligase [ADP-forming] subunit beta of Actinobacillus succinogenes (strain ATCC 55618 / DSM 22257 / CCUG 43843 / 130Z).